We begin with the raw amino-acid sequence, 381 residues long: L-lactate dehydrogenase (381 aa).

One can recognise an FMN hydroxy acid dehydrogenase domain in the interval 1–380 (MIISSASDYR…KPEALVDLSK (380 aa)). Tyrosine 24 is a substrate binding site. FMN is bound by residues serine 106 and glutamine 127. Tyrosine 129 contacts substrate. Threonine 155 serves as a coordination point for FMN. Substrate is bound at residue arginine 164. Residue lysine 251 coordinates FMN. Catalysis depends on histidine 275, which acts as the Proton acceptor. Substrate is bound at residue arginine 278. Residue 306-330 (DSGIRNGLDIVRMLALGADATMLGR) coordinates FMN.

It belongs to the FMN-dependent alpha-hydroxy acid dehydrogenase family. It depends on FMN as a cofactor.

It is found in the cell inner membrane. The enzyme catalyses (S)-lactate + A = pyruvate + AH2. Catalyzes the conversion of L-lactate to pyruvate. Is coupled to the respiratory chain. The polypeptide is L-lactate dehydrogenase (Haemophilus influenzae (strain ATCC 51907 / DSM 11121 / KW20 / Rd)).